The chain runs to 70 residues: Gas vesicle protein A (70 aa).

Belongs to the gas vesicle GvpA family. As to quaternary structure, the gas vesicle shell is 2 nm thick and consists of a single layer of this protein. It forms helical ribs nearly perpendicular to the long axis of the vesicle.

It localises to the gas vesicle shell. Its function is as follows. Gas vesicles are hollow, gas filled proteinaceous nanostructures found in some microorganisms. During planktonic growth they allow positioning of the organism at a favorable depth for light or nutrient acquisition. GvpA forms the protein shell. This Ancylobacter aquaticus protein is Gas vesicle protein A.